The primary structure comprises 66 residues: Large ribosomal subunit protein bL32 (66 aa).

Residues 1–18 are compositionally biased toward basic residues; sequence MAIVPKRKTSKQRKHKRR. Residues 1–21 form a disordered region; that stretch reads MAIVPKRKTSKQRKHKRRTND.

It belongs to the bacterial ribosomal protein bL32 family.

In Mycoplasmopsis agalactiae (strain NCTC 10123 / CIP 59.7 / PG2) (Mycoplasma agalactiae), this protein is Large ribosomal subunit protein bL32.